We begin with the raw amino-acid sequence, 914 residues long: TRPM8 channel-associated factor 2 (914 aa).

A Peptidase M60 domain is found at 541 to 840; it reads DAWMSTGLNL…TYLQLQEAFG (300 aa).

This sequence belongs to the TCAF family. Interacts with TRPM8 (via N-terminus and C-terminus domains); the interaction inhibits TRPM8 channel activity. Interacts with TRPV6.

The protein localises to the cell membrane. Negatively regulates the plasma membrane cation channel TRPM8 activity. Involved in the recruitment of TRPM8 to the cell surface. Promotes prostate cancer cell migration stimulation in a TRPM8-dependent manner. In Bos taurus (Bovine), this protein is TRPM8 channel-associated factor 2.